Here is a 575-residue protein sequence, read N- to C-terminus: V-type ATP synthase alpha chain (575 aa).

238–245 (GPFGAGKT) contributes to the ATP binding site.

The protein belongs to the ATPase alpha/beta chains family.

The catalysed reaction is ATP + H2O + 4 H(+)(in) = ADP + phosphate + 5 H(+)(out). Functionally, produces ATP from ADP in the presence of a proton gradient across the membrane. The V-type alpha chain is a catalytic subunit. The sequence is that of V-type ATP synthase alpha chain from Borreliella afzelii (strain PKo) (Borrelia afzelii).